A 505-amino-acid polypeptide reads, in one-letter code: AMP phosphorylase (505 aa).

Residues glycine 170, 196–201 (SRAITS), and threonine 205 contribute to the AMP site. The active-site Proton donor is the aspartate 258. 2 residues coordinate AMP: serine 266 and lysine 290.

This sequence belongs to the thymidine/pyrimidine-nucleoside phosphorylase family. Type 2 subfamily.

It carries out the reaction AMP + phosphate = alpha-D-ribose 1,5-bisphosphate + adenine. The catalysed reaction is CMP + phosphate = cytosine + alpha-D-ribose 1,5-bisphosphate. The enzyme catalyses UMP + phosphate = alpha-D-ribose 1,5-bisphosphate + uracil. Functionally, catalyzes the conversion of AMP and phosphate to adenine and ribose 1,5-bisphosphate (R15P). Exhibits phosphorylase activity toward CMP and UMP in addition to AMP. Functions in an archaeal AMP degradation pathway, together with R15P isomerase and RubisCO. In Methanococcus vannielii (strain ATCC 35089 / DSM 1224 / JCM 13029 / OCM 148 / SB), this protein is AMP phosphorylase.